The following is a 326-amino-acid chain: Cinnamoyl-CoA reductase CAD2 (326 aa).

NADP(+)-binding positions include 14-20, Arg39, Lys46, 66-67, and 86-88; these read GASGYIA, NL, and TAS. 4 residues coordinate (E)-coniferaldehyde: Ser130, Tyr136, Arg141, and Tyr165. NADP(+)-binding positions include Tyr165, Lys169, 192 to 195, and Ser207; that span reads PAMV. Residue Lys169 is the Proton donor of the active site. (E)-coniferaldehyde contacts are provided by Met194, Ser207, Phe226, Val257, and Tyr290.

This sequence belongs to the NAD(P)-dependent epimerase/dehydratase family. Dihydroflavonol-4-reductase subfamily.

It localises to the cytoplasm. The catalysed reaction is (E)-cinnamaldehyde + NADP(+) + CoA = (E)-cinnamoyl-CoA + NADPH + H(+). It catalyses the reaction (E)-coniferaldehyde + NADP(+) + CoA = (E)-feruloyl-CoA + NADPH + H(+). It carries out the reaction (E)-4-coumaraldehyde + NADP(+) + CoA = (E)-4-coumaroyl-CoA + NADPH + H(+). It participates in aromatic compound metabolism; phenylpropanoid biosynthesis. In terms of biological role, involved in lignin biosynthesis. Regulates the monolignol composition by catalyzing the conversion of cinnamoyl-CoAs into their corresponding cinnamaldehydes. Can use coumaraldehyde and coniferaldehyde as substrates, but barely sinapaldehyde. In Medicago truncatula (Barrel medic), this protein is Cinnamoyl-CoA reductase CAD2.